A 628-amino-acid polypeptide reads, in one-letter code: tRNA(Thr) (cytosine(32)-N(3))-methyltransferase (628 aa).

Residues 1 to 18 (MGVADLIKKFESISKEEG) show a composition bias toward basic and acidic residues. 3 disordered regions span residues 1-106 (MGVA…GENA), 124-269 (AEVL…VNDL), and 302-331 (NIAH…TEGS). A compositionally biased stretch (polar residues) spans 22 to 31 (VDTNSSSKPL). Positions 32–42 (KSNDETKELHQ) are enriched in basic and acidic residues. Positions 53–62 (DVNEEFENEP) are enriched in acidic residues. A Phosphoserine modification is found at serine 93. The span at 132–146 (EESDAIQEGVAEETE) shows a compositional bias: acidic residues. Phosphothreonine is present on threonine 150. Residues 173 to 186 (PAEEYSQSEEDADI) are compositionally biased toward acidic residues. The segment covering 196-207 (NAENASQQANDG) has biased composition (polar residues). Residues 215 to 230 (KNKKKKNKKKNKKKRN) show a composition bias toward basic residues. Residues 231 to 240 (GNVNTNANVD) show a composition bias toward polar residues. A phosphoserine mark is found at serine 321 and serine 326. Threonine 347 carries the phosphothreonine modification. The S-adenosyl-L-methionine site is built by tryptophan 399, tyrosine 403, glycine 441, aspartate 466, aspartate 492, leucine 493, and isoleucine 515.

Belongs to the methyltransferase superfamily. METL family. As to quaternary structure, interacts with SES1.

Its subcellular location is the cytoplasm. It localises to the cytoskeleton. The catalysed reaction is cytidine(32) in tRNA(Thr) + S-adenosyl-L-methionine = N(3)-methylcytidine(32) in tRNA(Thr) + S-adenosyl-L-homocysteine + H(+). It catalyses the reaction cytidine(32) in tRNA(Ser) + S-adenosyl-L-methionine = N(3)-methylcytidine(32) in tRNA(Ser) + S-adenosyl-L-homocysteine + H(+). Its function is as follows. S-adenosyl-L-methionine-dependent methyltransferase that mediates N(3)-methylcytidine modification of residue 32 of the tRNA anticodon loop of tRNA(Thr) and tRNA(Ser). N(3)-methylcytidine methylation of tRNA(Thr) requires the N6-threonylcarbamoylation of tRNA (t6A37) by the EKC/KEOPS complex as prerequisite. N(3)-methylcytidine methylation of tRNA(Ser) requires the formation of N(6)-dimethylallyladenosine(37) (i6A37) by MOD5 as prerequisite. Methylation of tRNA(Ser) is also stimulated by SES1. Binds F-actin and shows weak F-actin cross-linking activity. The protein is tRNA(Thr) (cytosine(32)-N(3))-methyltransferase (ABP140) of Saccharomyces cerevisiae (strain ATCC 204508 / S288c) (Baker's yeast).